Consider the following 82-residue polypeptide: Penaeidin-3g (82 aa).

Positions 1 to 19 (MRLVVCLVFLASFALVCQG) are cleaved as a signal peptide. Gln-20 bears the Pyrrolidone carboxylic acid mark. 3 cysteine pairs are disulfide-bonded: Cys-51-Cys-66, Cys-55-Cys-73, and Cys-67-Cys-74. Ser-81 is modified (serine amide).

The protein belongs to the penaeidin family.

The protein resides in the cytoplasmic granule. Its function is as follows. Antibacterial and antifungal activity. Presents chitin-binding activity. This Penaeus vannamei (Whiteleg shrimp) protein is Penaeidin-3g.